Here is a 525-residue protein sequence, read N- to C-terminus: Mitogen-activated protein kinase kinase 5 (525 aa).

A Protein kinase domain is found at 59-317 (ETEGGFLGKG…CTELLRHPFI (259 aa)). Residues 65 to 73 (LGKGSSGSV) and lysine 88 each bind ATP. Catalysis depends on aspartate 178, which acts as the Proton acceptor. The span at 358-367 (SALPLASEGG) shows a compositional bias: low complexity. 2 disordered regions span residues 358–392 (SALPLASEGGTPKATSPSPAPVSPLTLSCPLERHD) and 438–468 (SASVATDSGEGGGAAGVSAASLDNGQAAQHR).

This sequence belongs to the protein kinase superfamily. STE Ser/Thr protein kinase family. MAP kinase kinase subfamily. Mg(2+) serves as cofactor.

The enzyme catalyses L-tyrosyl-[protein] + ATP = O-phospho-L-tyrosyl-[protein] + ADP + H(+). It catalyses the reaction L-seryl-[protein] + ATP = O-phospho-L-seryl-[protein] + ADP + H(+). It carries out the reaction L-threonyl-[protein] + ATP = O-phospho-L-threonyl-[protein] + ADP + H(+). Its function is as follows. Protein kinase which phosphorylates and activates MPK4 in vitro. The chain is Mitogen-activated protein kinase kinase 5 from Leishmania mexicana.